Consider the following 264-residue polypeptide: MKQYIKLIKKIIRVGNQKKDRTGTGTLSIFGYNMKFDLKKGFPLLTTKKCHIASIIYELLWFLKGDTNIAYLNENKISIWNNWANESGDVGPIYGKQWRNWSTPEGHEIDQIKNVLIQLKKNPDSRRMLVSSWNVGDIDKMRLPPCHVLFQFYVFNNTLSCQLYQRSCDVFLGLPFNIASYSILIHMIAQQCDLKVGDFLWTGGDVHLYNNHIELAKKQILRIPRTLPKLTILKKPQSLFQYCFEDFKIIGYHPYPAIKGEISI.

R21 is a dUMP binding site. H51 is a binding site for (6R)-5,10-methylene-5,6,7,8-tetrahydrofolate. 126-127 is a dUMP binding site; sequence RR. C146 acts as the Nucleophile in catalysis. DUMP contacts are provided by residues 166-169, N177, and 207-209; these read RSCD and HLY. A (6R)-5,10-methylene-5,6,7,8-tetrahydrofolate-binding site is contributed by D169. Residue S263 participates in (6R)-5,10-methylene-5,6,7,8-tetrahydrofolate binding.

The protein belongs to the thymidylate synthase family. Bacterial-type ThyA subfamily. In terms of assembly, homodimer.

Its subcellular location is the cytoplasm. It carries out the reaction dUMP + (6R)-5,10-methylene-5,6,7,8-tetrahydrofolate = 7,8-dihydrofolate + dTMP. The protein operates within pyrimidine metabolism; dTTP biosynthesis. Catalyzes the reductive methylation of 2'-deoxyuridine-5'-monophosphate (dUMP) to 2'-deoxythymidine-5'-monophosphate (dTMP) while utilizing 5,10-methylenetetrahydrofolate (mTHF) as the methyl donor and reductant in the reaction, yielding dihydrofolate (DHF) as a by-product. This enzymatic reaction provides an intracellular de novo source of dTMP, an essential precursor for DNA biosynthesis. This Buchnera aphidicola subsp. Acyrthosiphon pisum (strain Tuc7) protein is Thymidylate synthase.